Here is a 353-residue protein sequence, read N- to C-terminus: Ion-translocating oxidoreductase complex subunit D (353 aa).

The next 4 membrane-spanning stretches (helical) occupy residues 20–40, 44–64, 77–108, and 123–143; these read IMLL…YYFG, IIQV…ILHL, SALL…AIII, and PAMV…TSWL. T187 is modified (FMN phosphoryl threonine). 4 helical membrane passes run 214–234, 242–262, 267–287, and 301–318; these read VIAG…GVFL, WHIP…GWLL, LVTP…FFIA, and LLYG…RSYG.

The protein belongs to the NqrB/RnfD family. The complex is composed of six subunits: RnfA, RnfB, RnfC, RnfD, RnfE and RnfG. The cofactor is FMN.

It localises to the cell inner membrane. In terms of biological role, part of a membrane-bound complex that couples electron transfer with translocation of ions across the membrane. The polypeptide is Ion-translocating oxidoreductase complex subunit D (Erwinia tasmaniensis (strain DSM 17950 / CFBP 7177 / CIP 109463 / NCPPB 4357 / Et1/99)).